The sequence spans 365 residues: Short-chain dehydrogenase iccH (365 aa).

NADP(+) contacts are provided by leucine 16, arginine 52, and aspartate 70. Asparagine 90 carries an N-linked (GlcNAc...) asparagine glycan. The NADP(+) site is built by asparagine 102, tyrosine 221, lysine 225, and serine 260. Catalysis depends on tyrosine 221, which acts as the Proton donor. Lysine 225 functions as the Lowers pKa of active site Tyr in the catalytic mechanism. Residues 267 to 287 (IWVMFLLMKFVLPLLAPLAVW) form a helical membrane-spanning segment. Residues asparagine 291 and asparagine 324 are each glycosylated (N-linked (GlcNAc...) asparagine).

The protein belongs to the short-chain dehydrogenases/reductases (SDR) family.

The protein resides in the membrane. Its pathway is mycotoxin biosynthesis. In terms of biological role, NADH-dependent flavin oxidoreductase; part of the gene cluster that mediates the biosynthesis of ilicicolin H, a 4-hydroxy-2-pyridonealkaloid that has potent and broad antifungal activities by inhibiting the mitochondrial respiration chain. IccA to iccE are sufficient for ilicicolin H biosynthesis and the roles of the remaining enzymes, iccF, iccG and iccH within the pathway have still to be determined. The biosynthesis of ilicicolin H starts with formation of the tetramic acid by the hybrid PKS-NRPS synthetase iccA with the partnering trans-enoyl reductase iccB since iccA lacks a designated enoylreductase (ER) domain. The cytochrome P450 monooxygenase iccC then catalyzes the ring expansion of the tetramate to the acyclic 2-pyridone. The pericyclase iccD further converts the acyclic 2-pyridone into 8-epi-ilicicolin H. Finally, the epimerase iccE converts 8-epi-ilicicolin H into ilicicolin H via epimerizationd. This is Short-chain dehydrogenase iccH from Talaromyces variabilis (Penicillium variabile).